A 156-amino-acid chain; its full sequence is Small ribosomal subunit protein uS7 (156 aa).

The protein belongs to the universal ribosomal protein uS7 family. In terms of assembly, part of the 30S ribosomal subunit. Contacts proteins S9 and S11.

One of the primary rRNA binding proteins, it binds directly to 16S rRNA where it nucleates assembly of the head domain of the 30S subunit. Is located at the subunit interface close to the decoding center, probably blocks exit of the E-site tRNA. This is Small ribosomal subunit protein uS7 from Thermomicrobium roseum (strain ATCC 27502 / DSM 5159 / P-2).